Here is a 154-residue protein sequence, read N- to C-terminus: Cyanate hydratase (154 aa).

Catalysis depends on residues Arg100, Glu103, and Ser126.

This sequence belongs to the cyanase family.

The enzyme catalyses cyanate + hydrogencarbonate + 3 H(+) = NH4(+) + 2 CO2. Catalyzes the reaction of cyanate with bicarbonate to produce ammonia and carbon dioxide. This chain is Cyanate hydratase, found in Aspergillus clavatus (strain ATCC 1007 / CBS 513.65 / DSM 816 / NCTC 3887 / NRRL 1 / QM 1276 / 107).